The chain runs to 349 residues: Ion-translocating oxidoreductase complex subunit D (349 aa).

3 helical membrane-spanning segments follow: residues 20–42 (VMQR…FGWG), 77–99 (SAML…WMIV), and 124–144 (AMAA…TWIA). The residue at position 185 (Thr-185) is an FMN phosphoryl threonine. A run of 5 helical transmembrane segments spans residues 212–232 (STGV…LVLL), 239–259 (WHIS…GFLL), 265–285 (ASPL…FIAT), 291–311 (ATSP…VYII), and 315–335 (GGYP…APFI).

Belongs to the NqrB/RnfD family. In terms of assembly, the complex is composed of six subunits: RnfA, RnfB, RnfC, RnfD, RnfE and RnfG. FMN serves as cofactor.

It localises to the cell inner membrane. Part of a membrane-bound complex that couples electron transfer with translocation of ions across the membrane. In Shewanella baltica (strain OS195), this protein is Ion-translocating oxidoreductase complex subunit D.